The chain runs to 357 residues: Methylthioribose-1-phosphate isomerase (357 aa).

Residues 49–51 (RGA), Arg-89, and Gln-197 each bind substrate. The active-site Proton donor is Asp-238. 248-249 (NK) lines the substrate pocket.

Belongs to the eIF-2B alpha/beta/delta subunits family. MtnA subfamily.

The enzyme catalyses 5-(methylsulfanyl)-alpha-D-ribose 1-phosphate = 5-(methylsulfanyl)-D-ribulose 1-phosphate. The protein operates within amino-acid biosynthesis; L-methionine biosynthesis via salvage pathway; L-methionine from S-methyl-5-thio-alpha-D-ribose 1-phosphate: step 1/6. In terms of biological role, catalyzes the interconversion of methylthioribose-1-phosphate (MTR-1-P) into methylthioribulose-1-phosphate (MTRu-1-P). The chain is Methylthioribose-1-phosphate isomerase from Leptospira biflexa serovar Patoc (strain Patoc 1 / Ames).